The sequence spans 75 residues: uncharacterized protein (75 aa).

Low complexity predominate over residues 1-14; that stretch reads MNDNNDNNNNNKNI. The disordered stretch occupies residues 1–30; the sequence is MNDNNDNNNNNKNIDNVDDDNDDNDKGKYK.

This is an uncharacterized protein from Dictyostelium discoideum (Social amoeba).